The sequence spans 361 residues: Outer membrane protein P2 (361 aa).

The signal sequence occupies residues 1 to 20 (MKKTLAALIVGAFAASAANA).

It belongs to the Gram-negative porin family. In terms of assembly, homotrimer.

The protein localises to the cell outer membrane. Forms pores that allow passive diffusion of small molecules across the outer membrane. The polypeptide is Outer membrane protein P2 (ompP2) (Haemophilus influenzae).